Reading from the N-terminus, the 131-residue chain is D-ribose pyranase (131 aa).

Residue histidine 20 is the Proton donor of the active site. Residues aspartate 28, histidine 98, and tyrosine 120–asparagine 122 contribute to the substrate site.

Belongs to the RbsD / FucU family. RbsD subfamily. As to quaternary structure, homodecamer.

It is found in the cytoplasm. The enzyme catalyses beta-D-ribopyranose = beta-D-ribofuranose. It participates in carbohydrate metabolism; D-ribose degradation; D-ribose 5-phosphate from beta-D-ribopyranose: step 1/2. Its function is as follows. Catalyzes the interconversion of beta-pyran and beta-furan forms of D-ribose. The polypeptide is D-ribose pyranase (Bacillus cereus (strain B4264)).